The following is a 585-amino-acid chain: Arginine--tRNA ligase (585 aa).

Positions alanine 131 to histidine 141 match the 'HIGH' region motif.

This sequence belongs to the class-I aminoacyl-tRNA synthetase family. As to quaternary structure, monomer.

It is found in the cytoplasm. It catalyses the reaction tRNA(Arg) + L-arginine + ATP = L-arginyl-tRNA(Arg) + AMP + diphosphate. The protein is Arginine--tRNA ligase of Rhizobium leguminosarum bv. trifolii (strain WSM2304).